Reading from the N-terminus, the 358-residue chain is Chorismate synthase (358 aa).

Arg46 lines the NADP(+) pocket. FMN-binding positions include 123–125 (RSS), 235–236 (NA), Gly275, 290–294 (KPTPS), and Arg316.

The protein belongs to the chorismate synthase family. Homotetramer. FMNH2 serves as cofactor.

It carries out the reaction 5-O-(1-carboxyvinyl)-3-phosphoshikimate = chorismate + phosphate. Its pathway is metabolic intermediate biosynthesis; chorismate biosynthesis; chorismate from D-erythrose 4-phosphate and phosphoenolpyruvate: step 7/7. Catalyzes the anti-1,4-elimination of the C-3 phosphate and the C-6 proR hydrogen from 5-enolpyruvylshikimate-3-phosphate (EPSP) to yield chorismate, which is the branch point compound that serves as the starting substrate for the three terminal pathways of aromatic amino acid biosynthesis. This reaction introduces a second double bond into the aromatic ring system. In Sulfurimonas denitrificans (strain ATCC 33889 / DSM 1251) (Thiomicrospira denitrificans (strain ATCC 33889 / DSM 1251)), this protein is Chorismate synthase.